A 172-amino-acid polypeptide reads, in one-letter code: uncharacterized protein (172 aa).

A HotDog ACOT-type domain is found at 10 to 122; it reads KESKVVKTSR…FLTFVALDSN (113 aa). Positions 148 to 172 are disordered; the sequence is RANERKNRKRHSQALANALGTDKPW.

This sequence belongs to the acyl coenzyme A hydrolase family.

This is an uncharacterized protein from Bacillus subtilis (strain 168).